A 215-amino-acid chain; its full sequence is Cytochrome c biogenesis ATP-binding export protein CcmA (215 aa).

The region spanning leucine 3 to asparagine 211 is the ABC transporter domain. Residue glycine 35–serine 42 participates in ATP binding.

It belongs to the ABC transporter superfamily. CcmA exporter (TC 3.A.1.107) family. In terms of assembly, the complex is composed of two ATP-binding proteins (CcmA) and two transmembrane proteins (CcmB).

It is found in the cell inner membrane. The enzyme catalyses heme b(in) + ATP + H2O = heme b(out) + ADP + phosphate + H(+). Functionally, part of the ABC transporter complex CcmAB involved in the biogenesis of c-type cytochromes; once thought to export heme, this seems not to be the case, but its exact role is uncertain. Responsible for energy coupling to the transport system. The chain is Cytochrome c biogenesis ATP-binding export protein CcmA from Rhizobium johnstonii (strain DSM 114642 / LMG 32736 / 3841) (Rhizobium leguminosarum bv. viciae).